A 242-amino-acid polypeptide reads, in one-letter code: Uridylate kinase (242 aa).

15–18 (KLSG) contributes to the ATP binding site. The involved in allosteric activation by GTP stretch occupies residues 23 to 28 (GDEGFG). G57 provides a ligand contact to UMP. Residues G58 and R62 each contribute to the ATP site. UMP contacts are provided by residues D77 and 138–145 (TGNPFCTT). 3 residues coordinate ATP: T165, Y171, and D174.

It belongs to the UMP kinase family. In terms of assembly, homohexamer.

The protein localises to the cytoplasm. It carries out the reaction UMP + ATP = UDP + ADP. The protein operates within pyrimidine metabolism; CTP biosynthesis via de novo pathway; UDP from UMP (UMPK route): step 1/1. With respect to regulation, allosterically activated by GTP. Inhibited by UTP. Functionally, catalyzes the reversible phosphorylation of UMP to UDP. This is Uridylate kinase from Shewanella sp. (strain ANA-3).